Reading from the N-terminus, the 285-residue chain is Protein unc-1 (285 aa).

Transmembrane regions (helical) follow at residues 27 to 47 (IGTI…IVTF) and 69 to 89 (IGRL…IPCI).

The protein belongs to the band 7/mec-2 family.

It localises to the cell membrane. It is found in the cell junction. The protein localises to the gap junction. The protein is Protein unc-1 (unc-1) of Caenorhabditis elegans.